Reading from the N-terminus, the 213-residue chain is StAR-related lipid transfer protein 5 (213 aa).

One can recognise an START domain in the interval 1 to 213 (MDPALAAQMS…LQKAVKQFHE (213 aa)).

In terms of biological role, may be involved in the intracellular transport of sterols or other lipids. May bind cholesterol or other sterols. The protein is StAR-related lipid transfer protein 5 (STARD5) of Pongo abelii (Sumatran orangutan).